The primary structure comprises 981 residues: Lateral signaling target protein 2 homolog (981 aa).

The disordered stretch occupies residues 308–462 (PLGSSSIEAP…LESSDDDTDE (155 aa)). Composition is skewed to low complexity over residues 326-356 (TTSS…TTNT), 369-380 (NNHNSNSNSSTN), 390-404 (SPSM…TPTA), and 412-433 (PSHS…PADW). The segment covering 434 to 462 (SDGDDEDEDDDDIEVDEEDLESSDDDTDE) has biased composition (acidic residues). A phosphoserine mark is found at serine 544 and serine 545. Disordered regions lie at residues 561–642 (EQMQ…SSLS) and 749–897 (DNVF…SPPA). Over residues 576–611 (HSHRHHQRHHHHHHHRHSHQHRQPHPHRTTRSGRKR) the composition is skewed to basic residues. The segment covering 630–642 (LASGDTSAASSLS) has biased composition (low complexity). Polar residues predominate over residues 760–791 (ATGQRHSAGASMQRNNTIDLASQSGEGSPSGA). Position 805 is a phosphoserine (serine 805). Composition is skewed to low complexity over residues 811-866 (AASS…PVSA) and 883-896 (PSSA…LSPP). The FYVE-type zinc-finger motif lies at 901–961 (DGKAPRCMAC…VCRDCYVREV (61 aa)). The Zn(2+) site is built by cysteine 907, cysteine 910, cysteine 923, cysteine 926, cysteine 931, cysteine 934, cysteine 953, and cysteine 956.

This sequence belongs to the lst-2 family.

Negative regulator of epidermal growth factor receptor (EGFR) signaling. The protein is Lateral signaling target protein 2 homolog of Drosophila erecta (Fruit fly).